The sequence spans 159 residues: Putative transmembrane protein ORF159 (159 aa).

A run of 2 helical transmembrane segments spans residues Leu-20 to Phe-40 and Ile-59 to Cys-79. Positions Arg-106–Asp-108 match the Cell attachment site motif.

The protein resides in the host membrane. In Acidianus sp. F28 (AFV-2), this protein is Putative transmembrane protein ORF159.